The chain runs to 299 residues: 4-diphosphocytidyl-2-C-methyl-D-erythritol kinase (299 aa).

Residue Lys-11 is part of the active site. 94–104 lines the ATP pocket; it reads PQGGGLGGGSS. Asp-136 is an active-site residue.

Belongs to the GHMP kinase family. IspE subfamily.

The catalysed reaction is 4-CDP-2-C-methyl-D-erythritol + ATP = 4-CDP-2-C-methyl-D-erythritol 2-phosphate + ADP + H(+). It functions in the pathway isoprenoid biosynthesis; isopentenyl diphosphate biosynthesis via DXP pathway; isopentenyl diphosphate from 1-deoxy-D-xylulose 5-phosphate: step 3/6. In terms of biological role, catalyzes the phosphorylation of the position 2 hydroxy group of 4-diphosphocytidyl-2C-methyl-D-erythritol. The sequence is that of 4-diphosphocytidyl-2-C-methyl-D-erythritol kinase from Bordetella pertussis (strain Tohama I / ATCC BAA-589 / NCTC 13251).